A 281-amino-acid chain; its full sequence is MARNNTITLYDLQLESGCTISPYVWRTKYALKHKGFDIDIVPGGFTGILERTGGRSERVPVIVDDGEWVLDSWVIAEYLDEKYPDRPMLFEGPTQKNLMKFLDNWLWSTAVGPWFRCYILDYHDLSLPQDRDYVRWSREQWFLGGQRLEDVQAGREDRLPLVPPTLEPFRRILAETKWLGGDQPNFADYSALAVFLWTASVARTPPLTEDDPLRDWLDRGFDLFDGLGRHPGMNPLFGLKLREGDPEPFVRQTGPAGAGGQALNKGPQTTKMPPRVAEKAD.

Residues 11-87 enclose the GST N-terminal domain; it reads DLQLESGCTI…YLDEKYPDRP (77 aa). A disordered region spans residues 244-281; the sequence is GDPEPFVRQTGPAGAGGQALNKGPQTTKMPPRVAEKAD.

This sequence belongs to the GST superfamily.

Its subcellular location is the cell inner membrane. Able to degrade various dimeric lignin compounds. Catalyzes the unique and reductive cleavage of arylglycerol-beta-aryl ether. In Sphingobium sp. (strain NBRC 103272 / SYK-6), this protein is Beta-etherase (ligE).